A 38-amino-acid polypeptide reads, in one-letter code: Trypsin inhibitor 2 (38 aa).

A Pyrrolidone carboxylic acid modification is found at Gln-1.

Contains disulfide bonds.

Functionally, inhibits trypsin-like proteases from the guts of the insect pests P.truncatus, P.americana, Acheta sp and Gryllus sp. This Opuntia streptacantha (Prickly pear cactus) protein is Trypsin inhibitor 2.